Consider the following 251-residue polypeptide: tRNA pseudouridine synthase A (251 aa).

D56 serves as the catalytic Nucleophile. Residue Y110 participates in substrate binding.

It belongs to the tRNA pseudouridine synthase TruA family.

The enzyme catalyses uridine(38/39/40) in tRNA = pseudouridine(38/39/40) in tRNA. Formation of pseudouridine at positions 38, 39 and 40 in the anticodon stem and loop of transfer RNAs. This chain is tRNA pseudouridine synthase A, found in Picrophilus torridus (strain ATCC 700027 / DSM 9790 / JCM 10055 / NBRC 100828 / KAW 2/3).